We begin with the raw amino-acid sequence, 83 residues long: MCGYYGNYYGGLGCGSYSYGGLGCGYGSCYGSGFRRLGCGYGCGYGYGSRSLCGSGYGYGSRSLCGSGYGCGSGYGSGFGYYY.

The stretch at 9–15 (YGGLGCG) is one RPT 1-1 repeat. One copy of the RPT 1-2 repeat lies at 19-25 (YGGLGCG). One copy of the RPT 2-1 repeat lies at 44–55 (GYGYGSRSLCGS). Residues 56–67 (GYGYGSRSLCGS) form an RPT 2-2 repeat.

The protein belongs to the KRTAP type 6 family. Interacts with wool keratins.

Functionally, in the wool cortex, wool keratin intermediate filaments are embedded in an interfilamentous matrix, consisting of hair keratin-associated proteins (KRTAP), which are essential for the formation of a rigid and resistant wool shaft through their extensive disulfide bond cross-linking with abundant cysteine residues of wool keratins. The matrix proteins include the high-sulfur and high-glycine-tyrosine keratins. This Ovis aries (Sheep) protein is Keratin-associated protein 6-1 (KRTAP6-1).